The primary structure comprises 786 residues: Endonuclease MutS2 (786 aa).

335 to 342 (GPNTGGKT) lines the ATP pocket. The region spanning 711–786 (LDLRGERFEN…GLGVTVVELK (76 aa)) is the Smr domain.

This sequence belongs to the DNA mismatch repair MutS family. MutS2 subfamily. In terms of assembly, homodimer. Binds to stalled ribosomes, contacting rRNA.

In terms of biological role, endonuclease that is involved in the suppression of homologous recombination and thus may have a key role in the control of bacterial genetic diversity. Functionally, acts as a ribosome collision sensor, splitting the ribosome into its 2 subunits. Detects stalled/collided 70S ribosomes which it binds and splits by an ATP-hydrolysis driven conformational change. Acts upstream of the ribosome quality control system (RQC), a ribosome-associated complex that mediates the extraction of incompletely synthesized nascent chains from stalled ribosomes and their subsequent degradation. Probably generates substrates for RQC. The sequence is that of Endonuclease MutS2 from Bacillus cytotoxicus (strain DSM 22905 / CIP 110041 / 391-98 / NVH 391-98).